The following is a 194-amino-acid chain: 3-isopropylmalate dehydratase small subunit (194 aa).

The protein belongs to the LeuD family. LeuD type 1 subfamily. In terms of assembly, heterodimer of LeuC and LeuD.

It catalyses the reaction (2R,3S)-3-isopropylmalate = (2S)-2-isopropylmalate. It functions in the pathway amino-acid biosynthesis; L-leucine biosynthesis; L-leucine from 3-methyl-2-oxobutanoate: step 2/4. Functionally, catalyzes the isomerization between 2-isopropylmalate and 3-isopropylmalate, via the formation of 2-isopropylmaleate. The polypeptide is 3-isopropylmalate dehydratase small subunit (Leuconostoc mesenteroides subsp. mesenteroides (strain ATCC 8293 / DSM 20343 / BCRC 11652 / CCM 1803 / JCM 6124 / NCDO 523 / NBRC 100496 / NCIMB 8023 / NCTC 12954 / NRRL B-1118 / 37Y)).